The chain runs to 199 residues: Recombination protein RecR (199 aa).

Residues 58–73 form a C4-type zinc finger; it reads CQRCFHLSSEDLCNIC. In terms of domain architecture, Toprim spans 81–175; the sequence is QTICVVADPR…RVTRIAFGLP (95 aa).

Belongs to the RecR family.

In terms of biological role, may play a role in DNA repair. It seems to be involved in an RecBC-independent recombinational process of DNA repair. It may act with RecF and RecO. This Synechococcus elongatus (strain ATCC 33912 / PCC 7942 / FACHB-805) (Anacystis nidulans R2) protein is Recombination protein RecR.